A 545-amino-acid polypeptide reads, in one-letter code: Sphingomyelin phosphodiesterase 5 (545 aa).

Residues 1-35 constitute a mitochondrion transit peptide; the sequence is MSLRESPFPNGFLEGLHAVGWGLIFPCFWFLDRLI. Topologically, residues 36–64 are mitochondrial matrix; it reads AVCISTTLERMWRLEQECYLHPLKVVFGS. The chain crosses the membrane as a helical; Signal-anchor for type II membrane protein span at residues 65–85; that stretch reads ILFFILFVISTPFALLGFILW. Residues 86-545 lie on the Mitochondrial intermembrane side of the membrane; it reads APLQAIRRPF…LSVSLDSEQN (460 aa). A Mg(2+)-binding site is contributed by Glu258. The Proton acceptor role is filled by His529.

It belongs to the neutral sphingomyelinase family. Mg(2+) serves as cofactor. The cofactor is Mn(2+).

It is found in the mitochondrion inner membrane. The protein localises to the endoplasmic reticulum membrane. It carries out the reaction a sphingomyelin + H2O = phosphocholine + an N-acylsphing-4-enine + H(+). The enzyme catalyses N-(hexadecanoyl)-sphing-4-enine-1-phosphocholine + H2O = N-hexadecanoylsphing-4-enine + phosphocholine + H(+). It functions in the pathway lipid metabolism; sphingolipid metabolism. Activated by the phospholipids cardiolipin, phosphatidylserine, and phosphatidylethanolamine. Strongest activation with cardiolipin. In terms of biological role, catalyzes the hydrolysis of membrane sphingomyelin to form phosphorylcholine and ceramide. The chain is Sphingomyelin phosphodiesterase 5 from Danio rerio (Zebrafish).